The chain runs to 447 residues: Protein cortex (447 aa).

WD repeat units lie at residues 108-148 (TYSY…IGHG), 149-188 (FAEY…KIMS), 198-237 (NMNC…ISWR), 281-325 (DSDW…VRDT), 344-380 (GELV…DQWG), and 384-423 (SGLD…NKMK). A D-box motif is present at residues 384–395 (SGLDRVRTMIFS).

The protein belongs to the WD repeat CORT family.

The protein resides in the cytoplasm. Functionally, controls wing pigmentation patterning by regulating scale cell development, thereby playing a key role in mimicry and crypsis. Probably acts as an activator of the anaphase promoting complex/cyclosome (APC/C) that promotes the ubiquitin ligase activity and substrate specificity of the APC/C. The sequence is that of Protein cortex from Heliconius melpomene (Postman butterfly).